A 393-amino-acid polypeptide reads, in one-letter code: tRNA(Met) cytidine acetate ligase (393 aa).

Glycine 81, asparagine 142, and arginine 167 together coordinate ATP.

This sequence belongs to the TmcAL family.

Its subcellular location is the cytoplasm. The enzyme catalyses cytidine(34) in elongator tRNA(Met) + acetate + ATP = N(4)-acetylcytidine(34) in elongator tRNA(Met) + AMP + diphosphate. Catalyzes the formation of N(4)-acetylcytidine (ac(4)C) at the wobble position of elongator tRNA(Met), using acetate and ATP as substrates. First activates an acetate ion to form acetyladenylate (Ac-AMP) and then transfers the acetyl group to tRNA to form ac(4)C34. The protein is tRNA(Met) cytidine acetate ligase of Bacillus cereus (strain ATCC 10987 / NRS 248).